We begin with the raw amino-acid sequence, 84 residues long: uncharacterized protein (84 aa).

A compositionally biased stretch (low complexity) spans 1-14; that stretch reads MQKLNKSSSKGKNN. Residues 1–84 are disordered; that stretch reads MQKLNKSSSK…VDKGERKESE (84 aa). Residues 28-40 show a composition bias toward gly residues; sequence STYGFGPYGGGGF. 2 stretches are compositionally biased toward basic and acidic residues: residues 53-65 and 73-84; these read DTKK…EEGT and KLVDKGERKESE.

This is an uncharacterized protein from Schizosaccharomyces pombe (strain 972 / ATCC 24843) (Fission yeast).